The sequence spans 444 residues: Phosphoglucosamine mutase (444 aa).

Catalysis depends on serine 101, which acts as the Phosphoserine intermediate. Residues serine 101, aspartate 240, aspartate 242, and aspartate 244 each contribute to the Mg(2+) site. Serine 101 carries the post-translational modification Phosphoserine.

Belongs to the phosphohexose mutase family. Mg(2+) is required as a cofactor. Post-translationally, activated by phosphorylation.

The enzyme catalyses alpha-D-glucosamine 1-phosphate = D-glucosamine 6-phosphate. Catalyzes the conversion of glucosamine-6-phosphate to glucosamine-1-phosphate. This chain is Phosphoglucosamine mutase, found in Aeromonas hydrophila subsp. hydrophila (strain ATCC 7966 / DSM 30187 / BCRC 13018 / CCUG 14551 / JCM 1027 / KCTC 2358 / NCIMB 9240 / NCTC 8049).